The sequence spans 425 residues: Serine--tRNA ligase (425 aa).

230–232 lines the L-serine pocket; it reads TAE. 261–263 contacts ATP; that stretch reads RSE. Glu284 contacts L-serine. 348–351 is an ATP binding site; the sequence is EISS. L-serine is bound at residue Ser384.

It belongs to the class-II aminoacyl-tRNA synthetase family. Type-1 seryl-tRNA synthetase subfamily. In terms of assembly, homodimer. The tRNA molecule binds across the dimer.

It is found in the cytoplasm. It catalyses the reaction tRNA(Ser) + L-serine + ATP = L-seryl-tRNA(Ser) + AMP + diphosphate + H(+). The enzyme catalyses tRNA(Sec) + L-serine + ATP = L-seryl-tRNA(Sec) + AMP + diphosphate + H(+). Its pathway is aminoacyl-tRNA biosynthesis; selenocysteinyl-tRNA(Sec) biosynthesis; L-seryl-tRNA(Sec) from L-serine and tRNA(Sec): step 1/1. Its function is as follows. Catalyzes the attachment of serine to tRNA(Ser). Is also able to aminoacylate tRNA(Sec) with serine, to form the misacylated tRNA L-seryl-tRNA(Sec), which will be further converted into selenocysteinyl-tRNA(Sec). This Nitratidesulfovibrio vulgaris (strain DSM 19637 / Miyazaki F) (Desulfovibrio vulgaris) protein is Serine--tRNA ligase.